Reading from the N-terminus, the 336-residue chain is Aspartate carbamoyltransferase catalytic subunit (336 aa).

Arg72 and Thr73 together coordinate carbamoyl phosphate. Lys100 lines the L-aspartate pocket. 3 residues coordinate carbamoyl phosphate: Arg122, His152, and Gln155. Arg185 and Arg240 together coordinate L-aspartate. Carbamoyl phosphate is bound by residues Gly281 and Pro282.

Belongs to the aspartate/ornithine carbamoyltransferase superfamily. ATCase family. As to quaternary structure, heterododecamer (2C3:3R2) of six catalytic PyrB chains organized as two trimers (C3), and six regulatory PyrI chains organized as three dimers (R2).

The catalysed reaction is carbamoyl phosphate + L-aspartate = N-carbamoyl-L-aspartate + phosphate + H(+). The protein operates within pyrimidine metabolism; UMP biosynthesis via de novo pathway; (S)-dihydroorotate from bicarbonate: step 2/3. Catalyzes the condensation of carbamoyl phosphate and aspartate to form carbamoyl aspartate and inorganic phosphate, the committed step in the de novo pyrimidine nucleotide biosynthesis pathway. The protein is Aspartate carbamoyltransferase catalytic subunit of Marinobacter nauticus (strain ATCC 700491 / DSM 11845 / VT8) (Marinobacter aquaeolei).